A 314-amino-acid chain; its full sequence is Protein EXORDIUM (314 aa).

The first 21 residues, 1–21 (MYLLVFKLFLFLSLLQISVSA), serve as a signal peptide directing secretion.

Belongs to the EXORDIUM family. In terms of tissue distribution, expressed in root tips, vascular tissue of roots, shoot apex, rosette leaves and embryos.

It localises to the secreted. The protein resides in the extracellular space. The protein localises to the apoplast. Required for cell expansion in leaves. May mediate brassinosteroid (BR)-induced leaf growth. May play a role in the control of BR responses in roots. May be involved in signaling processes that coordinate BR responses with environmental or developmental signals. The sequence is that of Protein EXORDIUM (EXO) from Arabidopsis thaliana (Mouse-ear cress).